The sequence spans 102 residues: Small ribosomal subunit protein uS10 (102 aa).

The protein belongs to the universal ribosomal protein uS10 family. As to quaternary structure, part of the 30S ribosomal subunit.

Involved in the binding of tRNA to the ribosomes. This is Small ribosomal subunit protein uS10 from Thermobifida fusca (strain YX).